The following is an 86-amino-acid chain: UPF0297 protein SERP1181 (86 aa).

It belongs to the UPF0297 family.

This Staphylococcus epidermidis (strain ATCC 35984 / DSM 28319 / BCRC 17069 / CCUG 31568 / BM 3577 / RP62A) protein is UPF0297 protein SERP1181.